Reading from the N-terminus, the 132-residue chain is ATP synthase epsilon chain (132 aa).

It belongs to the ATPase epsilon chain family. In terms of assembly, F-type ATPases have 2 components, CF(1) - the catalytic core - and CF(0) - the membrane proton channel. CF(1) has five subunits: alpha(3), beta(3), gamma(1), delta(1), epsilon(1). CF(0) has three main subunits: a, b and c.

It localises to the cell inner membrane. Functionally, produces ATP from ADP in the presence of a proton gradient across the membrane. This is ATP synthase epsilon chain from Anaeromyxobacter sp. (strain K).